Consider the following 313-residue polypeptide: uncharacterized protein (313 aa).

This is an uncharacterized protein from Treponema pallidum (strain Nichols).